Consider the following 118-residue polypeptide: UPF0102 protein Arth_2474 (118 aa).

This sequence belongs to the UPF0102 family.

This is UPF0102 protein Arth_2474 from Arthrobacter sp. (strain FB24).